The sequence spans 350 residues: Methylthioribose-1-phosphate isomerase (350 aa).

Substrate is bound by residues 47–49, R89, and Q196; that span reads RGA. D237 functions as the Proton donor in the catalytic mechanism. 247 to 248 is a substrate binding site; the sequence is NK.

The protein belongs to the eIF-2B alpha/beta/delta subunits family. MtnA subfamily.

It carries out the reaction 5-(methylsulfanyl)-alpha-D-ribose 1-phosphate = 5-(methylsulfanyl)-D-ribulose 1-phosphate. It functions in the pathway amino-acid biosynthesis; L-methionine biosynthesis via salvage pathway; L-methionine from S-methyl-5-thio-alpha-D-ribose 1-phosphate: step 1/6. Functionally, catalyzes the interconversion of methylthioribose-1-phosphate (MTR-1-P) into methylthioribulose-1-phosphate (MTRu-1-P). The polypeptide is Methylthioribose-1-phosphate isomerase (Nitratidesulfovibrio vulgaris (strain DSM 19637 / Miyazaki F) (Desulfovibrio vulgaris)).